Consider the following 1074-residue polypeptide: Isoleucine--tRNA ligase (1074 aa).

The short motif at 50 to 60 is the 'HIGH' region element; the sequence is PYTSGAAHMGT. The 'KMSKS' region signature appears at 605-609; that stretch reads GMSKS. Residue lysine 608 coordinates ATP.

This sequence belongs to the class-I aminoacyl-tRNA synthetase family. IleS type 2 subfamily. As to quaternary structure, monomer. Zn(2+) is required as a cofactor.

Its subcellular location is the cytoplasm. It catalyses the reaction tRNA(Ile) + L-isoleucine + ATP = L-isoleucyl-tRNA(Ile) + AMP + diphosphate. Functionally, catalyzes the attachment of isoleucine to tRNA(Ile). As IleRS can inadvertently accommodate and process structurally similar amino acids such as valine, to avoid such errors it has two additional distinct tRNA(Ile)-dependent editing activities. One activity is designated as 'pretransfer' editing and involves the hydrolysis of activated Val-AMP. The other activity is designated 'posttransfer' editing and involves deacylation of mischarged Val-tRNA(Ile). The protein is Isoleucine--tRNA ligase of Haloarcula marismortui (strain ATCC 43049 / DSM 3752 / JCM 8966 / VKM B-1809) (Halobacterium marismortui).